A 62-amino-acid polypeptide reads, in one-letter code: Keratin-associated protein 6-2 (62 aa).

This sequence belongs to the KRTAP type 6 family. As to quaternary structure, interacts with hair keratins.

Functionally, in the hair cortex, hair keratin intermediate filaments are embedded in an interfilamentous matrix, consisting of hair keratin-associated proteins (KRTAP), which are essential for the formation of a rigid and resistant hair shaft through their extensive disulfide bond cross-linking with abundant cysteine residues of hair keratins. The matrix proteins include the high-sulfur and high-glycine-tyrosine keratins. The polypeptide is Keratin-associated protein 6-2 (KRTAP6-2) (Homo sapiens (Human)).